Consider the following 215-residue polypeptide: Large ribosomal subunit protein uL4c (215 aa).

Residues 48–57 (SQRQGTISTK) show a composition bias toward polar residues. The disordered stretch occupies residues 48-85 (SQRQGTISTKTRSEVRGGGRKPWRQKGTGRARAGSSRS). A compositionally biased stretch (basic residues) spans 65-76 (GGRKPWRQKGTG).

It belongs to the universal ribosomal protein uL4 family. In terms of assembly, part of the 50S ribosomal subunit.

Its subcellular location is the plastid. The protein localises to the chloroplast. Its function is as follows. Probably binds the 23S rRNA. The sequence is that of Large ribosomal subunit protein uL4c (rpl4) from Trieres chinensis (Marine centric diatom).